The primary structure comprises 97 residues: Protein RnfH (97 aa).

The protein belongs to the UPF0125 (RnfH) family.

In Aliivibrio salmonicida (strain LFI1238) (Vibrio salmonicida (strain LFI1238)), this protein is Protein RnfH.